The chain runs to 339 residues: Arylacetonitrilase (339 aa).

Positions 5 to 290 (IRVAVTQAEP…EGIVYADLDL (286 aa)) constitute a CN hydrolase domain. Catalysis depends on Glu-45, which acts as the Proton acceptor. Lys-126 is an active-site residue. Residue Cys-167 is the Nucleophile of the active site.

The protein belongs to the carbon-nitrogen hydrolase superfamily. Nitrilase family.

It carries out the reaction a nitrile + 2 H2O = a carboxylate + NH4(+). It catalyses the reaction 4-chlorophenylacetonitrile + 2 H2O = 4-chlorophenylacetate + NH4(+). In terms of biological role, nitrilase that hydrolyzes preferentially phenylacetonitrile, (R,S)-mandelonitrile, and 3-indolylacetonitrile. The protein is Arylacetonitrilase of Fusarium vanettenii (strain ATCC MYA-4622 / CBS 123669 / FGSC 9596 / NRRL 45880 / 77-13-4) (Fusarium solani subsp. pisi).